Here is a 218-residue protein sequence, read N- to C-terminus: MDVEALLQSIPPLMVYLVVGAVVGIESLGIPLPGEIVLVSAAVLSSHPELAVNPIGVGGAAVIGAVVGDSIGYSIGRRFGLPLFDRLGRRFPKHFGPGHVALAERLFNRWGVRAVFLGRFIALLRIFAGPLAGALKMPYPRFLAANVTGGICWAGGTTALVYFAGMAAQHWLERFSWIALVIAVIAGITAAILLRERTSRAIAELEAEHCRKAGTTAA.

4 consecutive transmembrane segments (helical) span residues 10–30 (IPPL…SLGI), 55–75 (IGVG…GYSI), 147–167 (VTGG…AGMA), and 175–195 (FSWI…ILLR).

Belongs to the DedA family.

It is found in the cell membrane. This is an uncharacterized protein from Mycobacterium tuberculosis (strain CDC 1551 / Oshkosh).